The following is a 501-amino-acid chain: Tegument protein US24 (501 aa).

This sequence belongs to the herpesviridae US22 family.

The protein localises to the virion tegument. This chain is Tegument protein US24 (US24), found in Human cytomegalovirus (strain AD169) (HHV-5).